Consider the following 429-residue polypeptide: Enolase (429 aa).

Q163 serves as a coordination point for (2R)-2-phosphoglycerate. The active-site Proton donor is E205. D242, E285, and D312 together coordinate Mg(2+). Residues K337, R366, S367, and K388 each coordinate (2R)-2-phosphoglycerate. Residue K337 is the Proton acceptor of the active site.

This sequence belongs to the enolase family. It depends on Mg(2+) as a cofactor.

The protein resides in the cytoplasm. The protein localises to the secreted. It is found in the cell surface. It catalyses the reaction (2R)-2-phosphoglycerate = phosphoenolpyruvate + H2O. Its pathway is carbohydrate degradation; glycolysis; pyruvate from D-glyceraldehyde 3-phosphate: step 4/5. Functionally, catalyzes the reversible conversion of 2-phosphoglycerate (2-PG) into phosphoenolpyruvate (PEP). It is essential for the degradation of carbohydrates via glycolysis. In Aromatoleum aromaticum (strain DSM 19018 / LMG 30748 / EbN1) (Azoarcus sp. (strain EbN1)), this protein is Enolase.